The chain runs to 495 residues: UDP-N-acetylmuramate--L-alanine ligase (495 aa).

153-159 (GTHGKTT) provides a ligand contact to ATP.

It belongs to the MurCDEF family.

Its subcellular location is the cytoplasm. It catalyses the reaction UDP-N-acetyl-alpha-D-muramate + L-alanine + ATP = UDP-N-acetyl-alpha-D-muramoyl-L-alanine + ADP + phosphate + H(+). The protein operates within cell wall biogenesis; peptidoglycan biosynthesis. In terms of biological role, cell wall formation. This is UDP-N-acetylmuramate--L-alanine ligase from Gloeothece citriformis (strain PCC 7424) (Cyanothece sp. (strain PCC 7424)).